A 212-amino-acid chain; its full sequence is Cytidylate kinase (212 aa).

9-17 (GPAAAGKGT) is an ATP binding site.

This sequence belongs to the cytidylate kinase family. Type 1 subfamily.

Its subcellular location is the cytoplasm. The catalysed reaction is CMP + ATP = CDP + ADP. It catalyses the reaction dCMP + ATP = dCDP + ADP. This chain is Cytidylate kinase, found in Sinorhizobium medicae (strain WSM419) (Ensifer medicae).